The primary structure comprises 292 residues: Nucleophosmin (292 aa).

Met-1 carries the N-acetylmethionine modification. The necessary for interaction with APEX1 stretch occupies residues 1–117 (MEDSMDMDMS…PVHISGQHLV (117 aa)). The interval 1–185 (MEDSMDMDMS…DDDDFDEEET (185 aa)) is required for interaction with SENP3. Ser-4 is subject to Phosphoserine; by PLK1 and PLK2. Ser-10 is subject to Phosphoserine. Lys-27 is covalently cross-linked (Glycyl lysine isopeptide (Lys-Gly) (interchain with G-Cter in SUMO2)). Position 32 is an N6-acetyllysine; alternate (Lys-32). Lys-32 participates in a covalent cross-link: Glycyl lysine isopeptide (Lys-Gly) (interchain with G-Cter in SUMO1); alternate. Lys-32 is covalently cross-linked (Glycyl lysine isopeptide (Lys-Gly) (interchain with G-Cter in SUMO2); alternate). Ser-43 bears the Phosphoserine mark. The residue at position 67 (Tyr-67) is a Phosphotyrosine. Ser-70 is modified (phosphoserine). Phosphothreonine is present on residues Thr-75 and Thr-95. Ser-125 and Ser-139 each carry phosphoserine. Residues 138 to 248 (MSGKRSAPGG…PSSVEDIKAK (111 aa)) are disordered. Lys-141 participates in a covalent cross-link: Glycyl lysine isopeptide (Lys-Gly) (interchain with G-Cter in SUMO2). Residue Lys-150 is modified to N6-acetyllysine; alternate. A Glycyl lysine isopeptide (Lys-Gly) (interchain with G-Cter in SUMO2); alternate cross-link involves residue Lys-150. The Nuclear localization signal motif lies at 152-157 (PQKKVK). At Lys-154 the chain carries N6-acetyllysine. Over residues 159–186 (DEDDEDDDEDDEDDEDDDDDDFDEEETE) the composition is skewed to acidic residues. Residues 186–214 (EEKVPVKKSVRDTPAKNAQKSNQNGKDLK) form an interaction with NOP2 region. Basic and acidic residues predominate over residues 187 to 199 (EKVPVKKSVRDTP). Positions 190–196 (PVKKSVR) match the Nuclear localization signal motif. Thr-198 bears the Phosphothreonine; by CDK1 and CDK2 mark. Residues 201 to 210 (KNAQKSNQNG) show a composition bias toward polar residues. Residue Ser-206 is modified to ADP-ribosylserine. Lys-211 carries the N6-acetyllysine modification. Residue Lys-214 forms a Glycyl lysine isopeptide (Lys-Gly) (interchain with G-Cter in SUMO2) linkage. Thr-217 carries the phosphothreonine; by CDK1 modification. The segment covering 221–233 (KGQESFKKQEKTP) has biased composition (basic and acidic residues). Ser-225 is modified (phosphoserine). The residue at position 227 (Lys-227) is an N6-acetyllysine. Lys-228 is modified (N6-acetyllysine; alternate). Lys-228 is covalently cross-linked (Glycyl lysine isopeptide (Lys-Gly) (interchain with G-Cter in SUMO); alternate). Phosphothreonine; by CDK1 occurs at positions 232 and 235. Phosphoserine occurs at positions 240 and 241. The tract at residues 241–292 (SVEDIKAKMQASIEKGGSLPKVEAKFINYVKNCFRMTDQEAIQDLWQWRKSL) is required for nucleolar localization. Lys-246 is covalently cross-linked (Glycyl lysine isopeptide (Lys-Gly) (interchain with G-Cter in SUMO1); alternate). Glycyl lysine isopeptide (Lys-Gly) (interchain with G-Cter in SUMO2); alternate cross-links involve residues Lys-246 and Lys-248. An N6-acetyllysine; alternate modification is found at Lys-248. Ser-252 carries the phosphoserine modification. An N6-acetyllysine; alternate modification is found at Lys-255. A Glycyl lysine isopeptide (Lys-Gly) (interchain with G-Cter in SUMO1); alternate cross-link involves residue Lys-255. Residue Lys-255 forms a Glycyl lysine isopeptide (Lys-Gly) (interchain with G-Cter in SUMO2); alternate linkage. Phosphoserine is present on Ser-258. Residues Lys-261, Lys-265, and Lys-271 each participate in a glycyl lysine isopeptide (Lys-Gly) (interchain with G-Cter in SUMO2); alternate cross-link. A Glycyl lysine isopeptide (Lys-Gly) (interchain with G-Cter in SUMO); alternate cross-link involves residue Lys-261. Residues Lys-265 and Lys-271 each carry the N6-acetyllysine; alternate modification. Lys-265 is covalently cross-linked (Glycyl lysine isopeptide (Lys-Gly) (interchain with G-Cter in SUMO1); alternate). Lys-265 carries the N6-succinyllysine; alternate modification. Residue Thr-277 is modified to Phosphothreonine. Lys-290 bears the N6-acetyllysine mark.

The protein belongs to the nucleoplasmin family. In terms of assembly, decamer formed by two pentameric rings associated in a head-to-head fashion. Disulfide-linked dimers under certain conditions. Interacts with NSUN2 and SENP3. The SWAP complex consists of NPM1, NCL, PARP1 and SWAP70. Interacts with the methylated form of RPS10. Interacts (via N-terminal domain) with APEX1; the interaction is RNA-dependent and decreases peroxide-damaged cells. Interacts with NEK2. Interacts with ROCK2 and BRCA2. Interacts with RPGR. Interacts with CENPW. Interacts with EIF2AK2/PKR. Interacts with DDX31; this interaction prevents interaction between NPM1 and HDM2. Interacts with MYC; competitive with NOP53. Interacts with NOP53; the interaction is direct and competitive with MYC. Interacts with LRRC34. Interacts with RRP1B. Interacts with NPM3. Interacts with ALKBH2. Interacts with TTF1 (via C-terminal region). Interacts with NOP2. Interacts with ARID3C (via REKLES DOMAIN); the interaction mediates ARID3C nuclear shuttling. In terms of processing, acetylated at C-terminal lysine residues, thereby increasing affinity to histones. Post-translationally, ADP-ribosylated. Phosphorylated at Ser-4 by PLK1 and PLK2. Phosphorylation at Ser-4 by PLK2 in S phase is required for centriole duplication and is sufficient to trigger centriole replication. Phosphorylation at Ser-4 by PLK1 takes place during mitosis. Phosphorylated by CDK2 at Ser-125 and Thr-198. Phosphorylation at Thr-198 may trigger initiation of centrosome duplication. Phosphorylated by CDK1 at Thr-198, Thr-217, Thr-232 and Thr-235 during cell mitosis. When these four sites are phosphorated, RNA-binding activity seem to be abolished. May be phosphorylated at Ser-70 by NEK2. The Thr-198 phosphorylated form has higher affinity for ROCK2. In terms of processing, sumoylated by ARF. Post-translationally, ubiquitinated. Ubiquitination leads to proteasomal degradation. Deubiquitinated by USP36. As to expression, expressed in B-cells that have been induced to switch to various Ig isotypes.

It localises to the nucleus. The protein resides in the nucleolus. It is found in the nucleoplasm. The protein localises to the cytoplasm. Its subcellular location is the cytoskeleton. It localises to the microtubule organizing center. The protein resides in the centrosome. Involved in diverse cellular processes such as ribosome biogenesis, centrosome duplication, protein chaperoning, histone assembly, cell proliferation, and regulation of tumor suppressors p53/TP53 and ARF. Binds ribosome presumably to drive ribosome nuclear export. Associated with nucleolar ribonucleoprotein structures and bind single-stranded nucleic acids. Acts as a chaperonin for the core histones H3, H2B and H4. Stimulates APEX1 endonuclease activity on apurinic/apyrimidinic (AP) double-stranded DNA but inhibits APEX1 endonuclease activity on AP single-stranded RNA. May exert a control of APEX1 endonuclease activity within nucleoli devoted to repair AP on rDNA and the removal of oxidized rRNA molecules. In concert with BRCA2, regulates centrosome duplication. Regulates centriole duplication: phosphorylation by PLK2 is able to trigger centriole replication. Negatively regulates the activation of EIF2AK2/PKR and suppresses apoptosis through inhibition of EIF2AK2/PKR autophosphorylation. Antagonizes the inhibitory effect of ATF5 on cell proliferation and relieves ATF5-induced G2/M blockade. In complex with MYC enhances the transcription of MYC target genes. May act as chaperonin or cotransporter in the nucleolar localization of transcription termination factor TTF1. The sequence is that of Nucleophosmin (Npm1) from Mus musculus (Mouse).